The primary structure comprises 259 residues: Hydroxyacylglutathione hydrolase (259 aa).

7 residues coordinate Zn(2+): His56, His58, Asp60, His61, His112, Asp133, and His171. A disordered region spans residues 220–243 (NPFLRTGETSVKEKADERSDAQNT). The span at 229–239 (SVKEKADERSD) shows a compositional bias: basic and acidic residues.

The protein belongs to the metallo-beta-lactamase superfamily. Glyoxalase II family. In terms of assembly, monomer. Zn(2+) is required as a cofactor.

It carries out the reaction an S-(2-hydroxyacyl)glutathione + H2O = a 2-hydroxy carboxylate + glutathione + H(+). Its pathway is secondary metabolite metabolism; methylglyoxal degradation; (R)-lactate from methylglyoxal: step 2/2. Its function is as follows. Thiolesterase that catalyzes the hydrolysis of S-D-lactoyl-glutathione to form glutathione and D-lactic acid. The polypeptide is Hydroxyacylglutathione hydrolase (Pseudomonas syringae pv. syringae (strain B728a)).